The primary structure comprises 871 residues: Alanine--tRNA ligase (871 aa).

Zn(2+)-binding residues include His-561, His-565, Cys-665, and His-669.

Belongs to the class-II aminoacyl-tRNA synthetase family. The cofactor is Zn(2+).

It localises to the cytoplasm. The enzyme catalyses tRNA(Ala) + L-alanine + ATP = L-alanyl-tRNA(Ala) + AMP + diphosphate. In terms of biological role, catalyzes the attachment of alanine to tRNA(Ala) in a two-step reaction: alanine is first activated by ATP to form Ala-AMP and then transferred to the acceptor end of tRNA(Ala). Also edits incorrectly charged Ser-tRNA(Ala) and Gly-tRNA(Ala) via its editing domain. The protein is Alanine--tRNA ligase of Dehalococcoides mccartyi (strain CBDB1).